The sequence spans 256 residues: Putative cysteine-rich repeat secretory protein 21 (256 aa).

Positions 1–30 are cleaved as a signal peptide; it reads MYSSVSKRLVSVHILVVVALQLLFIPNVLS. Gnk2-homologous domains lie at 37-139 and 145-253; these read YLHH…SIDT and YQNN…LYPF.

This sequence belongs to the cysteine-rich repeat secretory protein family.

It is found in the secreted. This chain is Putative cysteine-rich repeat secretory protein 21 (CRRSP21), found in Arabidopsis thaliana (Mouse-ear cress).